A 375-amino-acid polypeptide reads, in one-letter code: ORC1-type DNA replication protein 3 (375 aa).

ATP is bound by residues 66–70 (TGKTT), Tyr-209, and Arg-221.

This sequence belongs to the CDC6/cdc18 family.

In terms of biological role, involved in regulation of DNA replication. The polypeptide is ORC1-type DNA replication protein 3 (cdc6c) (Haloarcula marismortui (strain ATCC 43049 / DSM 3752 / JCM 8966 / VKM B-1809) (Halobacterium marismortui)).